A 712-amino-acid chain; its full sequence is Osmolarity two-component system protein SSK1 (712 aa).

The interval 73 to 114 (ADNTSSNNTNDNSCRSKSNGAGSGANLSVNSNTKSSVSPTAG) is disordered. Positions 74–85 (DNTSSNNTNDNS) are enriched in low complexity. Over residues 87-113 (RSKSNGAGSGANLSVNSNTKSSVSPTA) the composition is skewed to polar residues. A phosphoserine mark is found at S110, S195, S327, S351, S368, and S380. The disordered stretch occupies residues 340-362 (KADLKGKDGNSSPQEFKLITDEE). A disordered region spans residues 448-468 (EVQRRKEDVTPASPILTSSQT). The region spanning 505-647 (NVLIVEDNVI…WLSKKITEWG (143 aa)) is the Response regulatory domain. D554 is subject to 4-aspartylphosphate. The segment at 672-712 (KSPQKPIAPSNPHSFKQATSMTPTHSPVRKNSNLSPTQIEL) is disordered. S673 carries the phosphoserine modification. Residues 682-712 (NPHSFKQATSMTPTHSPVRKNSNLSPTQIEL) show a composition bias toward polar residues. T693 carries the phosphothreonine modification. Phosphoserine is present on residues S703 and S706.

It belongs to the SSK1 family. In terms of assembly, interacts with SSK2, SSK22 and YPD1. Post-translationally, the phosphorelay mechanism involves the sequential transfer of a phosphate group from 'His-576' (H1) to 'Asp-1144' (D1) of SLN1, then to 'His-64' (H2) of YPD1 and finally to Asp-554 (D2) of SSK1.

The protein resides in the cytoplasm. Functionally, final receptor of the SLN1-YPD1-SSK1 two-component regulatory system, which controls activity of the HOG1 pathway in response to changes in the osmolarity of the extracellular environment. Under normal osmotic conditions, maintained in a phosphorylated and inactive state by the phosphorelay intermediate protein YPD1. Under conditions of high osmolarity, the histidine kinase SLN1 is no longer active and the unphosphorylated form of SSK1 interacts with and activates SSK2 and SSK22, two MAPKKKs that further stimulate the PBS2-HOG1 MAPKK-MAPK cascade. Unphosphorylated SSK1 is subsequently degraded by the UBC7-dependent ubiquitin-proteasome system to down-regulate the HOG1 pathway after completion of the osmotic adaptation. The chain is Osmolarity two-component system protein SSK1 from Saccharomyces cerevisiae (strain ATCC 204508 / S288c) (Baker's yeast).